Here is a 261-residue protein sequence, read N- to C-terminus: MLGLKIEDAIKYNEKLKKYVYKKGDKLRINFKDKEALIEYNKTVLKVLFDLDIEFHKNGLIPTPINRYLFIKSTFETLKELGIEKPTVLEIGTGHSAIISLLIKKFYNAEVYATEVDEEFIDFAKRNIEKNKLDIKIINSKGRAIEGIEELKDKKFDLIISYPPFYSKNSVASGRKFGGALAKNVELIGGGKFGEEFSFKIIEEGINFLNKKGVISLMMPKKPEKRRELIIKKMKEVGLDVEVDEIKTGNRLRYIIKGIKG.

This sequence belongs to the methyltransferase superfamily.

The polypeptide is Putative methyltransferase MJ0046 (Methanocaldococcus jannaschii (strain ATCC 43067 / DSM 2661 / JAL-1 / JCM 10045 / NBRC 100440) (Methanococcus jannaschii)).